A 403-amino-acid polypeptide reads, in one-letter code: MTTAPTPSIFEPARLGPLTLRNRIVKAATFEGVMPRGAVSDDLINFHAEVARGGAAMTTVAYCAVSPGGRVHRDTLVMDERALPGLRRLTDAVHAEGALAAAQIGHAGLVANTLSNKTKTLAPSTRLSPPAMGLVKGATLAELDGVVSDFERTARVAVDAGFDAIEVHLGHNYLLSSFMSPNLNKRHDRYGGSVAKRAEYPRRVIEAVRVAAGSSVAVTAKFNMSDGVPKGLWLDQSLPIAQILEADGHLDAMQLTGGSSLLNGMYFFRGEVPLAEFVASQPKLVGYGLKFYGPKIFPTYPFEEGFFLPFARQFRQALRMPLILLGGINRVDTIEHALDEGFEFVAMARALLRDPQLVNKFQAESVDQGLCIHCNKCMPTIYTGTRCVVRDALVVREAPRLGQ.

Q103 is an FMN binding site. Y173 (proton donor) is an active-site residue. A348–R349 serves as a coordination point for FMN.

Belongs to the NADH:flavin oxidoreductase/NADH oxidase family. FMN is required as a cofactor.

The catalysed reaction is 2 4-sulfanylbutanoate + NAD(+) = 4,4'-disulfanyldibutanoate + NADH + H(+). Its activity is regulated as follows. Inactivated by cobalt, nickel and zinc ions. Involved in the degradation of the organic disulfide 4,4'-dithiodibutyric acid (DTDB). Catalyzes the initial cleavage of DTDB into 2 molecules of 4-mercaptobutyric acid (4MB). Low activities are observed with other disulfide compounds, such as 3,3'-dithiodipropionic acid DTDP, 3,3'-thiodipropionic acid TDP and DTNB. The protein is 4,4'-dithiodibutanoate disulfide reductase of Rhodococcus erythropolis (Arthrobacter picolinophilus).